The sequence spans 152 residues: MTTMLKTQVHVVVIYLLIQIAFSQVKPGSDLKWSTLKSVVTITNRLGDGSTLKLHCKSADDDLGLKILAPNGSWSFKFRPSIVPGVTLFFCHFTWPGQSKWFNIYDDDRDGVRMGIPCIYCIWDIGKYGPCRFSEIDDAFNICYDWNGNRRS.

The first 23 residues, 1 to 23 (MTTMLKTQVHVVVIYLLIQIAFS), serve as a signal peptide directing secretion. A glycan (N-linked (GlcNAc...) asparagine) is linked at N71.

This sequence belongs to the plant self-incompatibility (S1) protein family.

Its subcellular location is the secreted. This Arabidopsis thaliana (Mouse-ear cress) protein is S-protein homolog 4.